We begin with the raw amino-acid sequence, 34 residues long: Somatostatin (34 aa).

Residues 1 to 20 (AVERPRQDGQVHEPPGRERK) form a disordered region. Residues Cys-23 and Cys-34 are joined by a disulfide bond.

It belongs to the somatostatin family.

The protein resides in the secreted. Somatostatin inhibits the release of somatotropin. This Myxine glutinosa (Atlantic hagfish) protein is Somatostatin (sst).